The primary structure comprises 95 residues: 6 kDa early secretory antigenic target (95 aa).

Helical transmembrane passes span 11–43 (IEAAASAIQGNVTSIHSLLDEGKQSLTKLAAAW) and 49–85 (EAYQGVQQKWDATATELNNALQNLARTISEAGQAMAS). The stretch at 56–87 (QKWDATATELNNALQNLARTISEAGQAMASTE) forms a coiled coil.

It belongs to the WXG100 family. ESAT-6 subfamily. As to quaternary structure, forms a tight 1:1 complex with EsxB (CFP-10).

The protein resides in the secreted. Its subcellular location is the host membrane. Its function is as follows. A secreted protein. Acts as a strong host T-cell antigen. Plays a number of roles in modulating the host's immune response to infection as well as being responsible for bacterial escape into the host cytoplasm. In Mycobacterium bovis (strain ATCC BAA-935 / AF2122/97), this protein is 6 kDa early secretory antigenic target (esxA).